Reading from the N-terminus, the 236-residue chain is 2-C-methyl-D-erythritol 4-phosphate cytidylyltransferase (236 aa).

The protein belongs to the IspD/TarI cytidylyltransferase family. IspD subfamily.

The enzyme catalyses 2-C-methyl-D-erythritol 4-phosphate + CTP + H(+) = 4-CDP-2-C-methyl-D-erythritol + diphosphate. Its pathway is isoprenoid biosynthesis; isopentenyl diphosphate biosynthesis via DXP pathway; isopentenyl diphosphate from 1-deoxy-D-xylulose 5-phosphate: step 2/6. Functionally, catalyzes the formation of 4-diphosphocytidyl-2-C-methyl-D-erythritol from CTP and 2-C-methyl-D-erythritol 4-phosphate (MEP). This is 2-C-methyl-D-erythritol 4-phosphate cytidylyltransferase from Burkholderia cenocepacia (strain ATCC BAA-245 / DSM 16553 / LMG 16656 / NCTC 13227 / J2315 / CF5610) (Burkholderia cepacia (strain J2315)).